A 124-amino-acid polypeptide reads, in one-letter code: Small ribosomal subunit protein uS12 (124 aa).

The protein belongs to the universal ribosomal protein uS12 family. Part of the 30S ribosomal subunit. Contacts proteins S8 and S17. May interact with IF1 in the 30S initiation complex.

In terms of biological role, with S4 and S5 plays an important role in translational accuracy. Interacts with and stabilizes bases of the 16S rRNA that are involved in tRNA selection in the A site and with the mRNA backbone. Located at the interface of the 30S and 50S subunits, it traverses the body of the 30S subunit contacting proteins on the other side and probably holding the rRNA structure together. The combined cluster of proteins S8, S12 and S17 appears to hold together the shoulder and platform of the 30S subunit. The chain is Small ribosomal subunit protein uS12 from Photorhabdus laumondii subsp. laumondii (strain DSM 15139 / CIP 105565 / TT01) (Photorhabdus luminescens subsp. laumondii).